The primary structure comprises 134 residues: Small ribosomal subunit protein bS6 (134 aa).

The tract at residues 99–134 is disordered; that stretch reads PSQLAKSADEKRARKAPRSENFDNDQDDESNDDSDE. Positions 105 to 119 are enriched in basic and acidic residues; sequence SADEKRARKAPRSEN. A compositionally biased stretch (acidic residues) spans 120-134; the sequence is FDNDQDDESNDDSDE.

Belongs to the bacterial ribosomal protein bS6 family.

Binds together with bS18 to 16S ribosomal RNA. The sequence is that of Small ribosomal subunit protein bS6 from Psychrobacter sp. (strain PRwf-1).